We begin with the raw amino-acid sequence, 391 residues long: Succinate--CoA ligase [GDP-forming] subunit beta, mitochondrial (391 aa).

Positions 5 to 233 (KKIMADHGVT…NAEFRQKEIF (229 aa)) constitute an ATP-grasp domain. GTP-binding positions include Gln16, 49–51 (GRG), and Leu105. Mg(2+) is bound by residues Asn202 and Asp216. Residues Asn267 and 324–326 (GIV) each bind substrate.

The protein belongs to the succinate/malate CoA ligase beta subunit family. GTP-specific subunit beta subfamily. In terms of assembly, heterodimer of an alpha and a beta subunit. The beta subunit determines specificity for GTP. The cofactor is Mg(2+). As to expression, widely expressed. Not present in breast muscle.

It is found in the mitochondrion. It carries out the reaction GTP + succinate + CoA = succinyl-CoA + GDP + phosphate. The protein operates within carbohydrate metabolism; tricarboxylic acid cycle; succinate from succinyl-CoA (ligase route): step 1/1. GTP-specific succinyl-CoA synthetase functions in the citric acid cycle (TCA), coupling the hydrolysis of succinyl-CoA to the synthesis of GTP and thus represents the only step of substrate-level phosphorylation in the TCA. The beta subunit provides nucleotide specificity of the enzyme and binds the substrate succinate, while the binding sites for coenzyme A and phosphate are found in the alpha subunit. In Columba livia (Rock dove), this protein is Succinate--CoA ligase [GDP-forming] subunit beta, mitochondrial.